A 357-amino-acid polypeptide reads, in one-letter code: Anthranilate phosphoribosyltransferase (357 aa).

5-phospho-alpha-D-ribose 1-diphosphate contacts are provided by residues Gly94, 97-98 (GD), Thr102, 104-107 (NLST), 122-130 (KHGNRAASS), and Gly134. Gly94 provides a ligand contact to anthranilate. Ser106 is a Mg(2+) binding site. An anthranilate-binding site is contributed by Asn125. Residue Arg180 coordinates anthranilate. Mg(2+) is bound by residues Asp238 and Glu239.

The protein belongs to the anthranilate phosphoribosyltransferase family. In terms of assembly, homodimer. Requires Mg(2+) as cofactor.

It catalyses the reaction N-(5-phospho-beta-D-ribosyl)anthranilate + diphosphate = 5-phospho-alpha-D-ribose 1-diphosphate + anthranilate. It functions in the pathway amino-acid biosynthesis; L-tryptophan biosynthesis; L-tryptophan from chorismate: step 2/5. In terms of biological role, catalyzes the transfer of the phosphoribosyl group of 5-phosphorylribose-1-pyrophosphate (PRPP) to anthranilate to yield N-(5'-phosphoribosyl)-anthranilate (PRA). The sequence is that of Anthranilate phosphoribosyltransferase from Mycobacterium sp. (strain JLS).